Reading from the N-terminus, the 470-residue chain is Cysteine--tRNA ligase (470 aa).

Zn(2+) is bound at residue Cys28. Positions 30 to 40 (PTVYNYIHIGN) match the 'HIGH' region motif. Residues Cys211, His236, and Glu240 each contribute to the Zn(2+) site. The 'KMSKS' region signature appears at 270 to 274 (KMSKS). Lys273 is an ATP binding site.

The protein belongs to the class-I aminoacyl-tRNA synthetase family. As to quaternary structure, monomer. Zn(2+) serves as cofactor.

The protein localises to the cytoplasm. The enzyme catalyses tRNA(Cys) + L-cysteine + ATP = L-cysteinyl-tRNA(Cys) + AMP + diphosphate. The sequence is that of Cysteine--tRNA ligase from Enterococcus faecalis (strain ATCC 700802 / V583).